A 550-amino-acid chain; its full sequence is Beta-fructofuranosidase, insoluble isoenzyme CWINV6 (550 aa).

Substrate-binding positions include 28-31, Gln-47, 92-93, 157-158, and Glu-214; these read WLND, WS, and RD. Residue Asp-31 is part of the active site. Residues Asn-235 and Asn-272 are each glycosylated (N-linked (GlcNAc...) asparagine).

The protein belongs to the glycosyl hydrolase 32 family. As to expression, expressed in seedlings and leaves, and, to a lower extent, in flowers and seeds.

The protein localises to the secreted. It is found in the extracellular space. It localises to the apoplast. The protein resides in the cell wall. The catalysed reaction is Hydrolysis of terminal, non-reducing (2-&gt;1)- and (2-&gt;6)-linked beta-D-fructofuranose residues in fructans.. In terms of biological role, 6 and 1-fructan exohydrolase that can degrade both inulin and levan-type fructans, such as phlein, levan, neokestose, levanbiose, 6-kestose, 1-kestose, inulin, and 1,1-nystose. The protein is Beta-fructofuranosidase, insoluble isoenzyme CWINV6 (CWINV6) of Arabidopsis thaliana (Mouse-ear cress).